The following is a 349-amino-acid chain: S-adenosylmethionine:tRNA ribosyltransferase-isomerase (349 aa).

Belongs to the QueA family. Monomer.

It is found in the cytoplasm. It catalyses the reaction 7-aminomethyl-7-carbaguanosine(34) in tRNA + S-adenosyl-L-methionine = epoxyqueuosine(34) in tRNA + adenine + L-methionine + 2 H(+). It participates in tRNA modification; tRNA-queuosine biosynthesis. Functionally, transfers and isomerizes the ribose moiety from AdoMet to the 7-aminomethyl group of 7-deazaguanine (preQ1-tRNA) to give epoxyqueuosine (oQ-tRNA). This is S-adenosylmethionine:tRNA ribosyltransferase-isomerase from Cupriavidus pinatubonensis (strain JMP 134 / LMG 1197) (Cupriavidus necator (strain JMP 134)).